The chain runs to 272 residues: Ethanolamine ammonia-lyase small subunit (272 aa).

The adenosylcob(III)alamin site is built by Val-161, Glu-182, and Cys-211.

It belongs to the EutC family. The basic unit is a heterodimer which dimerizes to form tetramers. The heterotetramers trimerize; 6 large subunits form a core ring with 6 small subunits projecting outwards. Requires adenosylcob(III)alamin as cofactor.

The protein localises to the bacterial microcompartment. The enzyme catalyses ethanolamine = acetaldehyde + NH4(+). It participates in amine and polyamine degradation; ethanolamine degradation. Its function is as follows. Catalyzes the deamination of various vicinal amino-alcohols to oxo compounds. Allows this organism to utilize ethanolamine as the sole source of nitrogen and carbon in the presence of external vitamin B12. In Pseudomonas putida (strain ATCC 700007 / DSM 6899 / JCM 31910 / BCRC 17059 / LMG 24140 / F1), this protein is Ethanolamine ammonia-lyase small subunit.